The chain runs to 113 residues: Nucleoid-associated protein CLH_3225 (113 aa).

Residues 1-14 (MAKGGFPGGFGGGN) are compositionally biased toward gly residues. The interval 1 to 31 (MAKGGFPGGFGGGNMNNLMKQAQKLQKQMED) is disordered.

It belongs to the YbaB/EbfC family. As to quaternary structure, homodimer.

The protein resides in the cytoplasm. The protein localises to the nucleoid. In terms of biological role, binds to DNA and alters its conformation. May be involved in regulation of gene expression, nucleoid organization and DNA protection. The chain is Nucleoid-associated protein CLH_3225 from Clostridium botulinum (strain Alaska E43 / Type E3).